The following is a 396-amino-acid chain: Pyruvate synthase subunit PorA (396 aa).

As to quaternary structure, heterotetramer of one alpha, one beta, one delta and one gamma chain.

The catalysed reaction is 2 oxidized [2Fe-2S]-[ferredoxin] + pyruvate + CoA = 2 reduced [2Fe-2S]-[ferredoxin] + acetyl-CoA + CO2 + H(+). The chain is Pyruvate synthase subunit PorA (porA) from Pyrococcus furiosus (strain ATCC 43587 / DSM 3638 / JCM 8422 / Vc1).